Here is a 119-residue protein sequence, read N- to C-terminus: Ribonuclease P protein component (119 aa).

The protein belongs to the RnpA family. As to quaternary structure, consists of a catalytic RNA component (M1 or rnpB) and a protein subunit.

It carries out the reaction Endonucleolytic cleavage of RNA, removing 5'-extranucleotides from tRNA precursor.. Functionally, RNaseP catalyzes the removal of the 5'-leader sequence from pre-tRNA to produce the mature 5'-terminus. It can also cleave other RNA substrates such as 4.5S RNA. The protein component plays an auxiliary but essential role in vivo by binding to the 5'-leader sequence and broadening the substrate specificity of the ribozyme. The polypeptide is Ribonuclease P protein component (Aeromonas salmonicida (strain A449)).